Consider the following 470-residue polypeptide: E3 ubiquitin-protein ligase TRAIP (470 aa).

The RING-type; atypical zinc-finger motif lies at cysteine 7–arginine 50. Residues alanine 76–threonine 277 adopt a coiled-coil conformation. Positions leucine 211–glutamine 470 are interaction with CYLD. The short motif at glutamine 461–glutamine 470 is the PIP-box element.

The protein belongs to the TRAIP family. As to quaternary structure, interacts (via PIP-box) with PCNA. Binds TRAF1, TRAF2, TRAF3, TRAF5 and TRAF6 is part of the receptor-TRAF signaling complex. May interact with CYLD; the C-terminus interacts with CYLD, however the interaction was not detected with the full-length protein. Interacts with POLK and POLN. Interacts with UIMC1. In terms of processing, autoubiquitinated. Sumoylated; sumoylation is required for nuclear localization. Sumoylation increases protein stability, possibly by preventing ubiquitination. In terms of tissue distribution, detected in testis and thymus, and at lower levels in spleen.

It localises to the nucleus. The protein resides in the nucleoplasm. It is found in the nucleolus. Its subcellular location is the chromosome. The protein localises to the cytoplasm. It localises to the perinuclear region. It carries out the reaction S-ubiquitinyl-[E2 ubiquitin-conjugating enzyme]-L-cysteine + [acceptor protein]-L-lysine = [E2 ubiquitin-conjugating enzyme]-L-cysteine + N(6)-ubiquitinyl-[acceptor protein]-L-lysine.. Its pathway is protein modification; protein ubiquitination. In terms of biological role, E3 ubiquitin ligase required to protect genome stability in response to replication stress. Acts as a key regulator of interstrand cross-link repair, which takes place when both strands of duplex DNA are covalently tethered together, thereby blocking replication and transcription. During mitosis, controls the choice between the two pathways of replication-coupled interstrand-cross-link repair by mediating ubiquitination of MCM7 subunit of the CMG helicase complex. Short ubiquitin chains on MCM7 promote recruitment of DNA glycosylase NEIL3. If the interstrand cross-link cannot be cleaved by NEIL3, the ubiquitin chains continue to grow on MCM7, promoting the unloading of the CMG helicase complex by the VCP/p97 ATPase, enabling the Fanconi anemia DNA repair pathway. Only catalyzes ubiquitination of MCM7 when forks converge. Also involved in the repair of covalent DNA-protein cross-links (DPCs) during DNA synthesis: promotes ubiquitination of DPCs, leading to their degradation by the proteasome. Has also been proposed to play a role in promoting translesion synthesis by mediating the assembly of 'Lys-63'-linked poly-ubiquitin chains on the Y-family polymerase POLN in order to facilitate bypass of DNA lesions and preserve genomic integrity. The function in translesion synthesis is however controversial. Acts as a regulator of the spindle assembly checkpoint. Also acts as a negative regulator of innate immune signaling by inhibiting activation of NF-kappa-B mediated by TNF. Negatively regulates TLR3/4- and RIG-I-mediated IRF3 activation and subsequent IFNB1 production and cellular antiviral response by promoting 'Lys-48'-linked polyubiquitination of TNK1 leading to its proteasomal degradation. The polypeptide is E3 ubiquitin-protein ligase TRAIP (Mus musculus (Mouse)).